The following is a 373-amino-acid chain: Probable peptidoglycan glycosyltransferase FtsW (373 aa).

Helical transmembrane passes span 15–35, 48–68, 80–100, 144–164, 168–188, 192–212, 278–298, 311–331, and 342–362; these read LVIL…VYSA, FYFL…MAVA, AVPI…PGIG, FFST…LILL, DLGA…AAGT, YIIA…MNVD, LGLI…LRGV, FLAF…MAVV, and LPFI…VGIL.

This sequence belongs to the SEDS family. FtsW subfamily.

It localises to the cell inner membrane. The catalysed reaction is [GlcNAc-(1-&gt;4)-Mur2Ac(oyl-L-Ala-gamma-D-Glu-L-Lys-D-Ala-D-Ala)](n)-di-trans,octa-cis-undecaprenyl diphosphate + beta-D-GlcNAc-(1-&gt;4)-Mur2Ac(oyl-L-Ala-gamma-D-Glu-L-Lys-D-Ala-D-Ala)-di-trans,octa-cis-undecaprenyl diphosphate = [GlcNAc-(1-&gt;4)-Mur2Ac(oyl-L-Ala-gamma-D-Glu-L-Lys-D-Ala-D-Ala)](n+1)-di-trans,octa-cis-undecaprenyl diphosphate + di-trans,octa-cis-undecaprenyl diphosphate + H(+). The protein operates within cell wall biogenesis; peptidoglycan biosynthesis. In terms of biological role, peptidoglycan polymerase that is essential for cell division. The chain is Probable peptidoglycan glycosyltransferase FtsW from Geobacter sulfurreducens (strain DL-1 / KN400).